Reading from the N-terminus, the 150-residue chain is Snaclec CTL-Eoc125 (150 aa).

The N-terminal stretch at 1-23 is a signal peptide; the sequence is MGRFISVSFGLLVVFLSLSGIGA. Cystine bridges form between C27-C38, C55-C144, and C121-C136. A C-type lectin domain is found at 34 to 145; that stretch reads YEGHCYKVFS…CSSTQQFICK (112 aa).

The protein belongs to the snaclec family. As to quaternary structure, heterodimer; disulfide-linked. As to expression, expressed by the venom gland.

The protein localises to the secreted. Interferes with one step of hemostasis (modulation of platelet aggregation, or coagulation cascade, for example). The protein is Snaclec CTL-Eoc125 of Echis ocellatus (Ocellated saw-scaled viper).